The primary structure comprises 269 residues: GTP cyclohydrolase FolE2 (269 aa).

This sequence belongs to the GTP cyclohydrolase IV family.

It catalyses the reaction GTP + H2O = 7,8-dihydroneopterin 3'-triphosphate + formate + H(+). It functions in the pathway cofactor biosynthesis; 7,8-dihydroneopterin triphosphate biosynthesis; 7,8-dihydroneopterin triphosphate from GTP: step 1/1. In terms of biological role, converts GTP to 7,8-dihydroneopterin triphosphate. In Burkholderia vietnamiensis (strain G4 / LMG 22486) (Burkholderia cepacia (strain R1808)), this protein is GTP cyclohydrolase FolE2.